Consider the following 430-residue polypeptide: Adenylosuccinate synthetase (430 aa).

Residues 12–18 (GDEGKGK) and 40–42 (GHT) each bind GTP. The Proton acceptor role is filled by Asp-13. 2 residues coordinate Mg(2+): Asp-13 and Gly-40. IMP contacts are provided by residues 13–16 (DEGK), 38–41 (NAGH), Thr-128, Arg-142, Gln-223, Thr-238, and Arg-302. His-41 acts as the Proton donor in catalysis. Substrate is bound at residue 298–304 (TTTGRPR). Residues Arg-304, 330–332 (SID), and 412–414 (SVG) each bind GTP.

It belongs to the adenylosuccinate synthetase family. Homodimer. Requires Mg(2+) as cofactor.

It is found in the cytoplasm. The catalysed reaction is IMP + L-aspartate + GTP = N(6)-(1,2-dicarboxyethyl)-AMP + GDP + phosphate + 2 H(+). It participates in purine metabolism; AMP biosynthesis via de novo pathway; AMP from IMP: step 1/2. Functionally, plays an important role in the de novo pathway of purine nucleotide biosynthesis. Catalyzes the first committed step in the biosynthesis of AMP from IMP. The protein is Adenylosuccinate synthetase of Streptococcus agalactiae serotype Ia (strain ATCC 27591 / A909 / CDC SS700).